A 613-amino-acid chain; its full sequence is Dihydroxy-acid dehydratase (613 aa).

D81 serves as a coordination point for Mg(2+). Position 122 (C122) interacts with [2Fe-2S] cluster. The Mg(2+) site is built by D123 and K124. N6-carboxylysine is present on K124. [2Fe-2S] cluster is bound at residue C195. E491 lines the Mg(2+) pocket. S517 functions as the Proton acceptor in the catalytic mechanism.

It belongs to the IlvD/Edd family. Homodimer. [2Fe-2S] cluster is required as a cofactor. The cofactor is Mg(2+).

It catalyses the reaction (2R)-2,3-dihydroxy-3-methylbutanoate = 3-methyl-2-oxobutanoate + H2O. It carries out the reaction (2R,3R)-2,3-dihydroxy-3-methylpentanoate = (S)-3-methyl-2-oxopentanoate + H2O. It participates in amino-acid biosynthesis; L-isoleucine biosynthesis; L-isoleucine from 2-oxobutanoate: step 3/4. Its pathway is amino-acid biosynthesis; L-valine biosynthesis; L-valine from pyruvate: step 3/4. Its function is as follows. Functions in the biosynthesis of branched-chain amino acids. Catalyzes the dehydration of (2R,3R)-2,3-dihydroxy-3-methylpentanoate (2,3-dihydroxy-3-methylvalerate) into 2-oxo-3-methylpentanoate (2-oxo-3-methylvalerate) and of (2R)-2,3-dihydroxy-3-methylbutanoate (2,3-dihydroxyisovalerate) into 2-oxo-3-methylbutanoate (2-oxoisovalerate), the penultimate precursor to L-isoleucine and L-valine, respectively. This is Dihydroxy-acid dehydratase from Aeromonas hydrophila subsp. hydrophila (strain ATCC 7966 / DSM 30187 / BCRC 13018 / CCUG 14551 / JCM 1027 / KCTC 2358 / NCIMB 9240 / NCTC 8049).